Consider the following 862-residue polypeptide: MVSNGHFASAGDDSFATSYEHGVQVVDEDKEFNRNLSKYLAYENVTPAGFNYHLISVFGSQSTGKSTLLNHLFGTHFSVMAETERRQTTKGIWMSKNKRQEPQRENSLPHVQNPNMADNILVMDVEGTDGRERGEDQDFERKSALFALATSEVLIVNIWEHQVGLYQGANMGLLKTVFEVNLQLFLKDKRSSPRSLLFFVIRDFLGTTPLQNLQNTLMQDLQRIWTSLSKPSGLEDSRIEDYFDFEFAALPHKNFQPDKFVAEVKKLTLRFREGHREPSKHNKTEGGIFLPEYHRRIPADGFAVYAEGIWDQIVNNKDLDLPTQQELLAQFRCDEISREVLVAFDEAIVPFETKQAEAAQSGNPEVLGGLGPAMKNARAKTVKGFETEASRYHKRVYQMKKAELEEKVDTRLKALFAGQLAAAHKSGISQFSDAVTAAVKAGQKKGASYDFADIVSKERKLALETFEKDAKATVVDGTSWSNYTQELALYQKDLEKISAQLRKDEMRRLATRVERWVRSRLGESVGLEFNALGSGRGGSGAPETGDKPSEDTIWDRIWSIFVDTVLDAERRFTERASSFDASLEEVDVGLWRLRRKAWGVLRSKIDEEMMEGNLLLKLRENFEDKFRYDAAGVPRIWRPTDDIEGLYTKARESTLTLIPLLSRFRLRETDTPPQLDRWVGYTPSSATPADEEDLAPIGGVDDDGMSLEEEMTMLSESKRQDLTVRFKKAADGVYVEAKRSAIGGMTQIPVYFYILLLALGWNEIVAVLRNPLYFFMLFLCAVGAFVTYQLNLWGPMIKMAEAASHQALEEGKKRLRDFLEPSEAGPHAARYKNSTEEYEMSNVKAPQRTNSGDDDDEDEGSW.

The Cytoplasmic portion of the chain corresponds to 1-747 (MVSNGHFASA…KRSAIGGMTQ (747 aa)). A GB1/RHD3-type G domain is found at 49-306 (GFNYHLISVF…IPADGFAVYA (258 aa)). 59–66 (GSQSTGKS) lines the GTP pocket. Positions 481–507 (SNYTQELALYQKDLEKISAQLRKDEMR) form a coiled coil. The helical transmembrane segment at 748–768 (IPVYFYILLLALGWNEIVAVL) threads the bilayer. At 769–771 (RNP) the chain is on the lumenal side. A helical transmembrane segment spans residues 772–792 (LYFFMLFLCAVGAFVTYQLNL). Residues 793–862 (WGPMIKMAEA…DDDDEDEGSW (70 aa)) lie on the Cytoplasmic side of the membrane. The disordered stretch occupies residues 819–862 (LEPSEAGPHAARYKNSTEEYEMSNVKAPQRTNSGDDDDEDEGSW). The span at 852–862 (GDDDDEDEGSW) shows a compositional bias: acidic residues.

It belongs to the TRAFAC class dynamin-like GTPase superfamily. GB1/RHD3 GTPase family. RHD3 subfamily.

It is found in the endoplasmic reticulum membrane. Functionally, cooperates with the reticulon proteins and tubule-shaping DP1 family proteins to generate and maintain the structure of the tubular endoplasmic reticulum network. Has GTPase activity, which is required for its function in ER organization. The protein is Protein SEY1 of Uncinocarpus reesii (strain UAMH 1704).